The primary structure comprises 319 residues: HPr kinase/phosphorylase (319 aa).

Residues His141 and Lys162 contribute to the active site. Residue 156–163 (GNSGVGKS) coordinates ATP. Residue Ser163 coordinates Mg(2+). Asp180 functions as the Proton acceptor; for phosphorylation activity. Proton donor; for dephosphorylation activity in the catalytic mechanism. The interval 204–213 (MEIRGIGIID) is important for the catalytic mechanism of both phosphorylation and dephosphorylation. Glu205 is a Mg(2+) binding site. The active site involves Arg246. The tract at residues 267–272 (PVKVGR) is important for the catalytic mechanism of dephosphorylation.

The protein belongs to the HPrK/P family. In terms of assembly, homohexamer. The cofactor is Mg(2+).

The catalysed reaction is [HPr protein]-L-serine + ATP = [HPr protein]-O-phospho-L-serine + ADP + H(+). It catalyses the reaction [HPr protein]-O-phospho-L-serine + phosphate + H(+) = [HPr protein]-L-serine + diphosphate. Catalyzes the ATP- as well as the pyrophosphate-dependent phosphorylation of a specific serine residue in HPr, a phosphocarrier protein of the phosphoenolpyruvate-dependent sugar phosphotransferase system (PTS). HprK/P also catalyzes the pyrophosphate-producing, inorganic phosphate-dependent dephosphorylation (phosphorolysis) of seryl-phosphorylated HPr (P-Ser-HPr). The two antagonistic activities of HprK/P are regulated by several intracellular metabolites, which change their concentration in response to the absence or presence of rapidly metabolisable carbon sources (glucose, fructose, etc.) in the growth medium. Therefore, by controlling the phosphorylation state of HPr, HPrK/P is a sensor enzyme that plays a major role in the regulation of carbon metabolism and sugar transport: it mediates carbon catabolite repression (CCR), and regulates PTS-catalyzed carbohydrate uptake and inducer exclusion. The sequence is that of HPr kinase/phosphorylase from Lactobacillus johnsonii (strain CNCM I-12250 / La1 / NCC 533).